The chain runs to 92 residues: Small ribosomal subunit protein uS19c (92 aa).

Belongs to the universal ribosomal protein uS19 family.

The protein localises to the plastid. The protein resides in the chloroplast. Functionally, protein S19 forms a complex with S13 that binds strongly to the 16S ribosomal RNA. This chain is Small ribosomal subunit protein uS19c (rps19), found in Marchantia polymorpha (Common liverwort).